Here is an 875-residue protein sequence, read N- to C-terminus: Ubiquitin-protein ligase E3A (875 aa).

Residues Cys44–Cys83 form a C4-type; atypical zinc finger. Residues Lys175 to Glu186 show a composition bias toward basic and acidic residues. The interval Lys175–Lys226 is disordered. A compositionally biased stretch (polar residues) spans Arg213–Gln225. Ser218 is subject to Phosphoserine. The segment at Ile401–Arg418 is E6-binding. The segment at Arg418–Gln517 is interaction with HCV core protein. Tyr659 is modified (phosphotyrosine; by ABL1). One can recognise an HECT domain in the interval Tyr776 to Leu875. Cys843 acts as the Glycyl thioester intermediate in catalysis.

As to quaternary structure, the active form is probably a homotrimer. Binds UBQLN1 and UBQLN2. Interacts with the 26S proteasome. Interacts with BPY2. Interacts with HIF1AN, MAPK6 and NEURL4; interaction with MAPK6 may be mediated by NEURL4. Interacts with the proteasomal subunit PSMD4. Interacts with ESR1 and WBP2. Interacts with BMAL1. Interacts with ARC. (Microbial infection) Interacts with HCV core protein and targets it to degradation. In terms of assembly, (Microbial infection) Interacts with the E6 protein of the cancer-associated human papillomavirus types 16 and 18. The E6/E6-AP complex binds to and targets the p53/TP53 tumor-suppressor protein for ubiquitin-mediated proteolysis. In terms of processing, phosphorylation at Tyr-659 by ABL1 impairs E3 ligase activity and protects p53/TP53 from degradation in (HPV)-infected cells.

Its subcellular location is the cytoplasm. It localises to the nucleus. It catalyses the reaction S-ubiquitinyl-[E2 ubiquitin-conjugating enzyme]-L-cysteine + [acceptor protein]-L-lysine = [E2 ubiquitin-conjugating enzyme]-L-cysteine + N(6)-ubiquitinyl-[acceptor protein]-L-lysine.. Its pathway is protein modification; protein ubiquitination. Its function is as follows. E3 ubiquitin-protein ligase which accepts ubiquitin from an E2 ubiquitin-conjugating enzyme in the form of a thioester and transfers it to its substrates. Several substrates have been identified including the BMAL1, ARC, LAMTOR1, RAD23A and RAD23B, MCM7 (which is involved in DNA replication), annexin A1, the PML tumor suppressor, and the cell cycle regulator CDKN1B. Additionally, may function as a cellular quality control ubiquitin ligase by helping the degradation of the cytoplasmic misfolded proteins. Finally, UBE3A also promotes its own degradation in vivo. Plays an important role in the regulation of the circadian clock: involved in the ubiquitination of the core clock component BMAL1, leading to its proteasomal degradation. Acts as transcriptional coactivator of progesterone receptor PGR upon progesterone hormone activation. Acts as a regulator of synaptic development by mediating ubiquitination and degradation of ARC. Required for synaptic remodeling in neurons by mediating ubiquitination and degradation of LAMTOR1, thereby limiting mTORC1 signaling and activity-dependent synaptic remodeling. Synergizes with WBP2 in enhancing PGR activity. (Microbial infection) Catalyzes the high-risk human papilloma virus E6-mediated ubiquitination of p53/TP53, contributing to the neoplastic progression of cells infected by these viruses. The chain is Ubiquitin-protein ligase E3A from Homo sapiens (Human).